A 453-amino-acid chain; its full sequence is Bifunctional protein GlmU (453 aa).

The segment at 1–225 (MHAHVILAAG…AEEALGVNTR (225 aa)) is pyrophosphorylase. UDP-N-acetyl-alpha-D-glucosamine is bound by residues 7–10 (LAAG), Lys-21, Gln-72, and 77–78 (GT). Residue Asp-102 coordinates Mg(2+). Gly-138, Glu-152, Asn-167, and Asn-223 together coordinate UDP-N-acetyl-alpha-D-glucosamine. Mg(2+) is bound at residue Asn-223. The tract at residues 226–246 (EELARVEGVLLRRLRAEWMGK) is linker. Residues 247-453 (GVRMILPETI…GYALRKLGEG (207 aa)) are N-acetyltransferase. Residues Arg-329 and Lys-347 each coordinate UDP-N-acetyl-alpha-D-glucosamine. The active-site Proton acceptor is the His-359. UDP-N-acetyl-alpha-D-glucosamine-binding residues include Tyr-362 and Asn-373. Residues Ala-376, 382–383 (NY), Ser-401, Ala-419, and Arg-436 each bind acetyl-CoA.

It in the N-terminal section; belongs to the N-acetylglucosamine-1-phosphate uridyltransferase family. The protein in the C-terminal section; belongs to the transferase hexapeptide repeat family. As to quaternary structure, homotrimer. It depends on Mg(2+) as a cofactor.

The protein localises to the cytoplasm. It carries out the reaction alpha-D-glucosamine 1-phosphate + acetyl-CoA = N-acetyl-alpha-D-glucosamine 1-phosphate + CoA + H(+). The enzyme catalyses N-acetyl-alpha-D-glucosamine 1-phosphate + UTP + H(+) = UDP-N-acetyl-alpha-D-glucosamine + diphosphate. It functions in the pathway nucleotide-sugar biosynthesis; UDP-N-acetyl-alpha-D-glucosamine biosynthesis; N-acetyl-alpha-D-glucosamine 1-phosphate from alpha-D-glucosamine 6-phosphate (route II): step 2/2. Its pathway is nucleotide-sugar biosynthesis; UDP-N-acetyl-alpha-D-glucosamine biosynthesis; UDP-N-acetyl-alpha-D-glucosamine from N-acetyl-alpha-D-glucosamine 1-phosphate: step 1/1. It participates in bacterial outer membrane biogenesis; LPS lipid A biosynthesis. Catalyzes the last two sequential reactions in the de novo biosynthetic pathway for UDP-N-acetylglucosamine (UDP-GlcNAc). The C-terminal domain catalyzes the transfer of acetyl group from acetyl coenzyme A to glucosamine-1-phosphate (GlcN-1-P) to produce N-acetylglucosamine-1-phosphate (GlcNAc-1-P), which is converted into UDP-GlcNAc by the transfer of uridine 5-monophosphate (from uridine 5-triphosphate), a reaction catalyzed by the N-terminal domain. This is Bifunctional protein GlmU from Thermus thermophilus (strain ATCC 27634 / DSM 579 / HB8).